Reading from the N-terminus, the 104-residue chain is Protein U9 (104 aa).

The polypeptide is Protein U9 (U9) (Homo sapiens (Human)).